A 214-amino-acid polypeptide reads, in one-letter code: Redox-sensing transcriptional repressor Rex (214 aa).

Positions 17–56 form a DNA-binding region, H-T-H motif; the sequence is LYYRIFKRFHADQVEKASSKQIADAMGIDSATVRRDFSYF. Residue 91 to 96 coordinates NAD(+); sequence GCGNIG.

Belongs to the transcriptional regulatory Rex family. Homodimer.

The protein resides in the cytoplasm. Functionally, modulates transcription in response to changes in cellular NADH/NAD(+) redox state. This is Redox-sensing transcriptional repressor Rex from Streptococcus pyogenes serotype M1.